Consider the following 320-residue polypeptide: NAD kinase (320 aa).

The active-site Proton acceptor is the Asp96. NAD(+) contacts are provided by residues 96-97 (DG), Arg101, 170-171 (NE), Asp200, and 211-216 (TAYAFS).

This sequence belongs to the NAD kinase family. The cofactor is a divalent metal cation.

The protein resides in the cytoplasm. It carries out the reaction NAD(+) + ATP = ADP + NADP(+) + H(+). Involved in the regulation of the intracellular balance of NAD and NADP, and is a key enzyme in the biosynthesis of NADP. Catalyzes specifically the phosphorylation on 2'-hydroxyl of the adenosine moiety of NAD to yield NADP. This is NAD kinase from Rhodococcus jostii (strain RHA1).